We begin with the raw amino-acid sequence, 396 residues long: Ornithine aminotransferase (396 aa).

Lysine 255 is subject to N6-(pyridoxal phosphate)lysine.

It belongs to the class-III pyridoxal-phosphate-dependent aminotransferase family. OAT subfamily. Requires pyridoxal 5'-phosphate as cofactor.

Its subcellular location is the cytoplasm. The enzyme catalyses a 2-oxocarboxylate + L-ornithine = L-glutamate 5-semialdehyde + an L-alpha-amino acid. It functions in the pathway amino-acid biosynthesis; L-proline biosynthesis; L-glutamate 5-semialdehyde from L-ornithine: step 1/1. In terms of biological role, catalyzes the interconversion of ornithine to glutamate semialdehyde. This Staphylococcus carnosus (strain TM300) protein is Ornithine aminotransferase.